Here is a 224-residue protein sequence, read N- to C-terminus: Peptidyl-prolyl cis-trans isomerase FKBP3 (224 aa).

An N-acetylalanine modification is found at Ala2. Ser36 bears the Phosphoserine mark. A disordered region spans residues 87 to 119 (NVKLNEDKPKETKSEETPDEGPPKYTKSVLKKG). The segment covering 89–102 (KLNEDKPKETKSEE) has biased composition (basic and acidic residues). At Lys99 the chain carries N6-acetyllysine. Positions 128–224 (GDVVHCWYTG…IFEVELVDID (97 aa)) constitute a PPIase FKBP-type domain. Phosphoserine is present on Ser152. N6-acetyllysine is present on Lys170.

Belongs to the FKBP-type PPIase family.

It localises to the nucleus. The enzyme catalyses [protein]-peptidylproline (omega=180) = [protein]-peptidylproline (omega=0). Its activity is regulated as follows. Inhibited preferentially by rapamycin over FK506. FK506- and rapamycin-binding proteins (FKBPs) constitute a family of receptors for the two immunosuppressants which inhibit T-cell proliferation by arresting two distinct cytoplasmic signal transmission pathways. PPIases accelerate the folding of proteins. This is Peptidyl-prolyl cis-trans isomerase FKBP3 (FKBP3) from Oryctolagus cuniculus (Rabbit).